A 71-amino-acid chain; its full sequence is Disintegrin tzabcanin (71 aa).

The Disintegrin domain maps to 1-71; sequence GEECDCGSPA…ADCPRNHFHA (71 aa). Intrachain disulfides connect Cys4–Cys19, Cys6–Cys14, Cys13–Cys36, Cys27–Cys33, Cys32–Cys57, and Cys45–Cys64. A Cell attachment site motif is present at residues 49-51; it reads RGD.

Belongs to the venom metalloproteinase (M12B) family. P-II subfamily. P-IIa sub-subfamily. Expressed by the venom gland.

The protein resides in the secreted. Functionally, inhibits fibrinogen interaction with platelets. Acts by binding to alpha-IIb/beta-3 (ITGA2B/ITGB3) on the platelet surface and inhibits aggregation induced by ADP, thrombin, platelet-activating factor and collagen. Inhibits cell adhesion to vitronectin, probably by blocking its receptor integrin alpha-V/beta-3 (ITGAV/ITGB3), and to fibronectin in vitro. Shows little to no cytotoxicity in vitro. The chain is Disintegrin tzabcanin from Crotalus tzabcan (Yucatan neotropical rattlesnake).